The following is a 308-amino-acid chain: NADH-cytochrome b5 reductase 1 (308 aa).

A helical transmembrane segment spans residues 10–27 (INGVYIPSALLIFGTTII). An FAD-binding FR-type domain is found at 59 to 164 (TEFQNFVLKD…RGPKGAMVYT (106 aa)). Residues 144-159 (TTLR…GPKG) and 170-207 (HIGM…QIDL) contribute to the FAD site.

The protein belongs to the flavoprotein pyridine nucleotide cytochrome reductase family. In terms of assembly, monomer. Component of the 2-(3-amino-3-carboxypropyl)histidine synthase complex composed of DPH1, DPH2, DPH3 and a NADH-dependent reductase, predominantly CBR1. It depends on FAD as a cofactor.

It is found in the mitochondrion outer membrane. The enzyme catalyses 2 Fe(III)-[cytochrome b5] + NADH = 2 Fe(II)-[cytochrome b5] + NAD(+) + H(+). It catalyses the reaction 2 Fe(3+)-[Dph3] + NADH = 2 Fe(2+)-[Dph3] + NAD(+) + H(+). The protein operates within protein modification; peptidyl-diphthamide biosynthesis. Functionally, NADH-dependent reductase for DPH3 and cytochrome b5. Required for the first step of diphthamide biosynthesis, a post-translational modification of histidine which occurs in elongation factor 2. DPH1 and DPH2 transfer a 3-amino-3-carboxypropyl (ACP) group from S-adenosyl-L-methionine (SAM) to a histidine residue, the reaction is assisted by a reduction system comprising DPH3 and a NADH-dependent reductase, predominantly CBR1. By reducing DPH3, also involved in the formation of the tRNA wobble base modification mcm5s 2U (5-methoxycarbonylmethyl-2-thiouridine), mediated by the elongator complex. The cytochrome b5/NADH cytochrome b5 reductase electron transfer system supports the catalytic activity of several sterol biosynthetic enzymes. The chain is NADH-cytochrome b5 reductase 1 (CBR1) from Coccidioides immitis (strain RS) (Valley fever fungus).